The following is a 475-amino-acid chain: Tubulin epsilon chain (475 aa).

Gly148 to Gly154 provides a ligand contact to GTP.

Belongs to the tubulin family. In terms of assembly, found in a complex with TEDC1, TEDC2, TUBE1 and TUBD1.

The protein resides in the cytoplasm. It is found in the cytoskeleton. It localises to the microtubule organizing center. Its subcellular location is the centrosome. The polypeptide is Tubulin epsilon chain (Tube1) (Mus musculus (Mouse)).